A 123-amino-acid chain; its full sequence is Large ribosomal subunit protein bL17 (123 aa).

This sequence belongs to the bacterial ribosomal protein bL17 family. As to quaternary structure, part of the 50S ribosomal subunit. Contacts protein L32.

The polypeptide is Large ribosomal subunit protein bL17 (Borreliella afzelii (strain PKo) (Borrelia afzelii)).